The primary structure comprises 478 residues: GMP reductase (478 aa).

CBS domains follow at residues 95–152 and 153–211; these read VVDT…VRDI and ALSD…AVDA. Residues 245-247 and 295-297 contribute to the NADP(+) site; these read DTA and GVG. Cysteine 302 functions as the Thioimidate intermediate in the catalytic mechanism.

The protein belongs to the IMPDH/GMPR family. GuaB1 subfamily. As to quaternary structure, homooctamer composed of two tetramers. The oligomerization state is regulated by ligands and pH. The cofactor is a monovalent cation.

The catalysed reaction is IMP + NH4(+) + NADP(+) = GMP + NADPH + 2 H(+). Its pathway is purine metabolism; IMP biosynthesis via salvage pathway. Its activity is regulated as follows. Activity is allosterically regulated by the ATP/GTP ratio in a pH-dependent manner. At pH 7.8, GTP has only a minor positive effect and ATP only a minor negative effect on the activity, however, at lower pH values, the effects of ATP and GTP increase. ATP-dependent inhibition can be restored by increasing GTP concentration. IMP and XMP are competitive inhibitors. Its function is as follows. Involved in the purine-salvage pathway. Catalyzes the NADPH-dependent conversion of GMP to IMP. Is not essential for viability, but may contribute to the regulation of the purine nucleotide pool by recycling GMP to IMP. The chain is GMP reductase from Mycolicibacterium smegmatis (strain ATCC 700084 / mc(2)155) (Mycobacterium smegmatis).